Here is a 238-residue protein sequence, read N- to C-terminus: Ribonuclease PH (238 aa).

Residues Arg-86 and 124–126 (GTR) each bind phosphate.

This sequence belongs to the RNase PH family. As to quaternary structure, homohexameric ring arranged as a trimer of dimers.

It catalyses the reaction tRNA(n+1) + phosphate = tRNA(n) + a ribonucleoside 5'-diphosphate. Its function is as follows. Phosphorolytic 3'-5' exoribonuclease that plays an important role in tRNA 3'-end maturation. Removes nucleotide residues following the 3'-CCA terminus of tRNAs; can also add nucleotides to the ends of RNA molecules by using nucleoside diphosphates as substrates, but this may not be physiologically important. Probably plays a role in initiation of 16S rRNA degradation (leading to ribosome degradation) during starvation. In Aliivibrio fischeri (strain ATCC 700601 / ES114) (Vibrio fischeri), this protein is Ribonuclease PH.